The following is a 662-amino-acid chain: FAST kinase domain-containing protein 3, mitochondrial (662 aa).

An RAP domain is found at 591–649 (IALCIDGPKRFCSNSKHLLGKEAIKQRHLQLLGYQVVQIPYHEIGMLKSRRELVEYLQR).

This sequence belongs to the FAST kinase family. As to expression, expression detected in spleen, thymus, testis, ovary, colon, heart, smooth muscle, kidney, brain, lung, liver and white adipose tissue with highest expression in liver and thyroid.

It localises to the mitochondrion. Its function is as follows. Required for normal mitochondrial respiration. Increases steady-state levels and half-lives of a subset of mature mitochondrial mRNAs MT-ND2, MT-ND3, MT-CYTB, MT-CO2, and MT-ATP8/6. Promotes MT-CO1 mRNA translation and increases mitochondrial complex IV assembly and activity. The polypeptide is FAST kinase domain-containing protein 3, mitochondrial (FASTKD3) (Homo sapiens (Human)).